Here is a 378-residue protein sequence, read N- to C-terminus: tRNA (guanine(26)-N(2))-dimethyltransferase (378 aa).

Residues 4 to 374 (KEVTEGKVRI…KGYEEIIRCV (371 aa)) enclose the Trm1 methyltransferase domain. Arginine 44, arginine 69, aspartate 87, aspartate 114, and alanine 115 together coordinate S-adenosyl-L-methionine. The Zn(2+) site is built by cysteine 246, cysteine 249, cysteine 263, and cysteine 266.

It belongs to the class I-like SAM-binding methyltransferase superfamily. Trm1 family.

The enzyme catalyses guanosine(26) in tRNA + 2 S-adenosyl-L-methionine = N(2)-dimethylguanosine(26) in tRNA + 2 S-adenosyl-L-homocysteine + 2 H(+). Its function is as follows. Dimethylates a single guanine residue at position 26 of a number of tRNAs using S-adenosyl-L-methionine as donor of the methyl groups. In Saccharolobus islandicus (strain M.14.25 / Kamchatka #1) (Sulfolobus islandicus), this protein is tRNA (guanine(26)-N(2))-dimethyltransferase.